The primary structure comprises 340 residues: Glycerol-3-phosphate dehydrogenase [NAD(P)+] (340 aa).

The NADPH site is built by Ser13, Tyr14, and Lys108. The sn-glycerol 3-phosphate site is built by Lys108, Gly137, and Thr139. Ala141 contributes to the NADPH binding site. The sn-glycerol 3-phosphate site is built by Lys193, Asp246, Ser256, Arg257, and Asn258. The Proton acceptor role is filled by Lys193. An NADPH-binding site is contributed by Arg257. Positions 281 and 283 each coordinate NADPH.

This sequence belongs to the NAD-dependent glycerol-3-phosphate dehydrogenase family.

It is found in the cytoplasm. The enzyme catalyses sn-glycerol 3-phosphate + NAD(+) = dihydroxyacetone phosphate + NADH + H(+). It carries out the reaction sn-glycerol 3-phosphate + NADP(+) = dihydroxyacetone phosphate + NADPH + H(+). Its pathway is membrane lipid metabolism; glycerophospholipid metabolism. Its function is as follows. Catalyzes the reduction of the glycolytic intermediate dihydroxyacetone phosphate (DHAP) to sn-glycerol 3-phosphate (G3P), the key precursor for phospholipid synthesis. This chain is Glycerol-3-phosphate dehydrogenase [NAD(P)+], found in Bartonella quintana (strain Toulouse) (Rochalimaea quintana).